A 62-amino-acid chain; its full sequence is Conotoxin reg3.7 (62 aa).

Positions 1 to 15 (RVLLTICLLLFPLSA) are cleaved as a signal peptide. A propeptide spanning residues 16–45 (LPLDGDQPADQPARHMQSAERNPRFDPVKR) is cleaved from the precursor. The segment at 17–37 (PLDGDQPADQPARHMQSAERN) is disordered. Disulfide bonds link Cys-46–Cys-60, Cys-47–Cys-58, and Cys-52–Cys-61. Cys-61 carries the post-translational modification Cysteine amide.

The protein belongs to the conotoxin M superfamily. Expressed by the venom duct.

The protein localises to the secreted. In Conus regius (Crown cone), this protein is Conotoxin reg3.7.